The primary structure comprises 535 residues: MFNIILAMVCALIGLIIGYVAISMKMKSSKEAAELTLLNAEQDAVDLRGKAEIEAEHIRKAAERESKAHQKELLLEAKEEARKYREEIEKEFKSDRQELKQMEARLTDRASSLDRKDENLSNKEKMLDSKEQSLTDKSRHINEREQEIATLETKKVEELSRIAELSQEEAKDIILADTEKDLAHDIATRIKEAEREVKDRSNKIAKDLLAQAMQRLAGEYVTEQTITTVHLPDDNMKGRIIGREGRNIRTLESLTGIDVIIDDTPEVVVLSGFDPIRREIARMTLESLIQDGRIHPARIEELVEKNRLEMDQRIREYGEAAAYEIGAPNLHPDLIKIMGRLQFRTSYGQNVLRHSVEVGKLAGILAGELGENVDLARRAGFLHDMGKAIDREVEGSHVEIGMEFARKYKEHPIVVNTIASHHGDVEPDSVIAVIVAAADALSSARPGARNESMENYIKRLRDLEEIANGFEGVQNAFALQAGREIRIMVQPGKVSDDQVVIMSHKVREKIEQNLDYPGNIKVTVIREMRAVDFAK.

Residues 4–24 form a helical membrane-spanning segment; sequence IILAMVCALIGLIIGYVAISM. The interval 107–145 is disordered; it reads TDRASSLDRKDENLSNKEKMLDSKEQSLTDKSRHINERE. The region spanning 225–285 is the KH domain; that stretch reads TITTVHLPDD…IRREIARMTL (61 aa). Positions 351–444 constitute an HD domain; it reads VLRHSVEVGK…VAAADALSSA (94 aa).

This sequence belongs to the RNase Y family.

The protein localises to the cell membrane. Functionally, endoribonuclease that initiates mRNA decay. This chain is Ribonuclease Y, found in Streptococcus agalactiae serotype Ia (strain ATCC 27591 / A909 / CDC SS700).